The primary structure comprises 186 residues: Lipoprotein signal peptidase (186 aa).

Helical transmembrane passes span 8-28 (FFSVFKPGYLAFVAFGLFLDL), 44-64 (IPVLGDFFRLSLTFNTGFVFG), 66-86 (FQDNALPSLFATGFAIVFLIF), and 97-117 (AWGWNFVMAGAFGNFLDKFFV). Active-site residues include Asp-142 and Asp-164. The helical transmembrane segment at 157–177 (WPAFNVADSCVSIGIVILLFT) threads the bilayer.

The protein belongs to the peptidase A8 family.

It is found in the cell inner membrane. It catalyses the reaction Release of signal peptides from bacterial membrane prolipoproteins. Hydrolyzes -Xaa-Yaa-Zaa-|-(S,diacylglyceryl)Cys-, in which Xaa is hydrophobic (preferably Leu), and Yaa (Ala or Ser) and Zaa (Gly or Ala) have small, neutral side chains.. Its pathway is protein modification; lipoprotein biosynthesis (signal peptide cleavage). Its function is as follows. This protein specifically catalyzes the removal of signal peptides from prolipoproteins. This Leptospira biflexa serovar Patoc (strain Patoc 1 / ATCC 23582 / Paris) protein is Lipoprotein signal peptidase.